Reading from the N-terminus, the 303-residue chain is MQIFVACPRGFCAGVERAIETVEIAIRRYPEKKIFVYHEIVHNSRVIQDFKARGVDFIEDITKVEPKSVLIFSAHGVSEEIEKYVKSLDLVLVDATCPLVSKIHREVQRFEKEGFIILVIGNRNHAEIIGTVGRTKTQAYIVQDPEDIDNLPSITGKLAYVTQSTLALEYTSTMINKIKEKFPNVVGRSDVCYATQNRQEAVKALAKEVDLMLIVGSTNSSNSRNLMQVSSKICQKAFLIDNYNEVEPDWFEGVDRVGISSGASAPEILVQDLVSFLKKRFPSAEVSDFKFKEEKVQFKLPII.

C12 lines the [4Fe-4S] cluster pocket. (2E)-4-hydroxy-3-methylbut-2-enyl diphosphate contacts are provided by H42 and H75. Dimethylallyl diphosphate-binding residues include H42 and H75. Residues H42 and H75 each contribute to the isopentenyl diphosphate site. [4Fe-4S] cluster is bound at residue C97. Position 125 (H125) interacts with (2E)-4-hydroxy-3-methylbut-2-enyl diphosphate. H125 serves as a coordination point for dimethylallyl diphosphate. H125 is an isopentenyl diphosphate binding site. E127 (proton donor) is an active-site residue. S164 is a (2E)-4-hydroxy-3-methylbut-2-enyl diphosphate binding site. C192 is a binding site for [4Fe-4S] cluster. Residues S220, S221, N222, and S264 each contribute to the (2E)-4-hydroxy-3-methylbut-2-enyl diphosphate site. Residues S220, S221, N222, and S264 each contribute to the dimethylallyl diphosphate site. Positions 220, 221, 222, and 264 each coordinate isopentenyl diphosphate.

It belongs to the IspH family. [4Fe-4S] cluster serves as cofactor.

The enzyme catalyses isopentenyl diphosphate + 2 oxidized [2Fe-2S]-[ferredoxin] + H2O = (2E)-4-hydroxy-3-methylbut-2-enyl diphosphate + 2 reduced [2Fe-2S]-[ferredoxin] + 2 H(+). It catalyses the reaction dimethylallyl diphosphate + 2 oxidized [2Fe-2S]-[ferredoxin] + H2O = (2E)-4-hydroxy-3-methylbut-2-enyl diphosphate + 2 reduced [2Fe-2S]-[ferredoxin] + 2 H(+). It functions in the pathway isoprenoid biosynthesis; dimethylallyl diphosphate biosynthesis; dimethylallyl diphosphate from (2E)-4-hydroxy-3-methylbutenyl diphosphate: step 1/1. It participates in isoprenoid biosynthesis; isopentenyl diphosphate biosynthesis via DXP pathway; isopentenyl diphosphate from 1-deoxy-D-xylulose 5-phosphate: step 6/6. Its function is as follows. Catalyzes the conversion of 1-hydroxy-2-methyl-2-(E)-butenyl 4-diphosphate (HMBPP) into a mixture of isopentenyl diphosphate (IPP) and dimethylallyl diphosphate (DMAPP). Acts in the terminal step of the DOXP/MEP pathway for isoprenoid precursor biosynthesis. The polypeptide is 4-hydroxy-3-methylbut-2-enyl diphosphate reductase (Neorickettsia sennetsu (strain ATCC VR-367 / Miyayama) (Ehrlichia sennetsu)).